The chain runs to 37 residues: Cytochrome b6-f complex subunit 7 (37 aa).

The helical transmembrane segment at 11–29 (AILSIVLVLVGLAWGFLLL) threads the bilayer.

The protein belongs to the PetM family. The 4 large subunits of the cytochrome b6-f complex are cytochrome b6, subunit IV (17 kDa polypeptide, PetD), cytochrome f and the Rieske protein, while the 4 small subunits are PetG, PetL, PetM and PetN. The complex functions as a dimer.

The protein localises to the cellular thylakoid membrane. In terms of biological role, component of the cytochrome b6-f complex, which mediates electron transfer between photosystem II (PSII) and photosystem I (PSI), cyclic electron flow around PSI, and state transitions. The protein is Cytochrome b6-f complex subunit 7 of Gloeothece citriformis (strain PCC 7424) (Cyanothece sp. (strain PCC 7424)).